Consider the following 572-residue polypeptide: Proline--tRNA ligase (572 aa).

The protein belongs to the class-II aminoacyl-tRNA synthetase family. ProS type 1 subfamily. In terms of assembly, homodimer.

It is found in the cytoplasm. It carries out the reaction tRNA(Pro) + L-proline + ATP = L-prolyl-tRNA(Pro) + AMP + diphosphate. Catalyzes the attachment of proline to tRNA(Pro) in a two-step reaction: proline is first activated by ATP to form Pro-AMP and then transferred to the acceptor end of tRNA(Pro). As ProRS can inadvertently accommodate and process non-cognate amino acids such as alanine and cysteine, to avoid such errors it has two additional distinct editing activities against alanine. One activity is designated as 'pretransfer' editing and involves the tRNA(Pro)-independent hydrolysis of activated Ala-AMP. The other activity is designated 'posttransfer' editing and involves deacylation of mischarged Ala-tRNA(Pro). The misacylated Cys-tRNA(Pro) is not edited by ProRS. The sequence is that of Proline--tRNA ligase from Enterococcus faecalis (strain ATCC 700802 / V583).